Reading from the N-terminus, the 384-residue chain is MELQEVLHMNGGEGDTSYAKNSSYNLFLIRVKPVLEQCIQELLRANLPNINKCFKVGDLGCASGPNTFSTVRDIVQSIDKVGQEKKNELERPTIQIFLNDLFQNDFNSVFKLLPSFYRNLEKENGRKIGSCLIGAMPGSFYSRLFPEESMHFLHSCYCLHWLSQVPSGLVTELGISANKGCIYSSKASGPPIKKAYLDQFTKDFTTFLRIHSEELISRGRMLLTFICKEDEFDHPNSMDLLEMSINDLVIEGHLEEEKLDSFNVPIYAPSTEEVKRIVEEEGSFEILYLETFYAPYDAGFSIDDDYQGRSHSPVSCDEHARAAHVASVVRSIYEPILASHFGEAILPDLSHRIAKNAAKVLRSGKGFYDSVIISLAKKPEKADM.

Residues Y18, C61, N66, D100, L101, S139, F140, and C156 each coordinate S-adenosyl-L-homocysteine. Y157 is a theobromine binding site. S-adenosyl-L-homocysteine is bound at residue C158. Residues H160 and W161 each contribute to the theobromine site. N178 contacts Mg(2+). A theobromine-binding site is contributed by S237. Mg(2+) is bound by residues D260, F262, and N263. Theobromine is bound at residue Y368.

This sequence belongs to the methyltransferase superfamily. Type-7 methyltransferase family. The cofactor is Mg(2+). Highly expressed in developing endosperm. Detected in young leaves and flower buds. Present in immature fruits (grains), but barely in mature fruits.

The enzyme catalyses 7-methylxanthine + S-adenosyl-L-methionine = theobromine + S-adenosyl-L-homocysteine + H(+). It catalyses the reaction theobromine + S-adenosyl-L-methionine = caffeine + S-adenosyl-L-homocysteine + H(+). It carries out the reaction 1,7-dimethylxanthine + S-adenosyl-L-methionine = caffeine + S-adenosyl-L-homocysteine + H(+). The protein operates within alkaloid biosynthesis. Functionally, involved in the biosynthesis of caffeine. Catalyzes the conversion of 7-methylxanthine (7mX) to theobromine and of theobromine to caffeine. Has 1-N-methylation activity. The chain is 3,7-dimethylxanthine N-methyltransferase 2 from Coffea arabica (Arabian coffee).